We begin with the raw amino-acid sequence, 500 residues long: Histidine--tRNA ligase (500 aa).

It belongs to the class-II aminoacyl-tRNA synthetase family. In terms of assembly, homodimer.

The protein localises to the cytoplasm. The catalysed reaction is tRNA(His) + L-histidine + ATP = L-histidyl-tRNA(His) + AMP + diphosphate + H(+). This chain is Histidine--tRNA ligase (hisS), found in Mesorhizobium japonicum (strain LMG 29417 / CECT 9101 / MAFF 303099) (Mesorhizobium loti (strain MAFF 303099)).